The sequence spans 65 residues: Large ribosomal subunit protein bL35 (65 aa).

It belongs to the bacterial ribosomal protein bL35 family.

In Polynucleobacter asymbioticus (strain DSM 18221 / CIP 109841 / QLW-P1DMWA-1) (Polynucleobacter necessarius subsp. asymbioticus), this protein is Large ribosomal subunit protein bL35.